The chain runs to 199 residues: Recombination protein RecR (199 aa).

The C4-type zinc-finger motif lies at 58–73 (CSTCNNLTDKDPCTIC). Positions 81–176 (NLICVVQDAR…RVTRLAYGLP (96 aa)) constitute a Toprim domain.

This sequence belongs to the RecR family.

In terms of biological role, may play a role in DNA repair. It seems to be involved in an RecBC-independent recombinational process of DNA repair. It may act with RecF and RecO. The protein is Recombination protein RecR of Natranaerobius thermophilus (strain ATCC BAA-1301 / DSM 18059 / JW/NM-WN-LF).